Reading from the N-terminus, the 415-residue chain is Serine hydroxymethyltransferase 1 (415 aa).

(6S)-5,6,7,8-tetrahydrofolate is bound by residues Leu122 and 126-128 (GHL). Lys230 carries the post-translational modification N6-(pyridoxal phosphate)lysine.

It belongs to the SHMT family. In terms of assembly, homodimer. It depends on pyridoxal 5'-phosphate as a cofactor.

Its subcellular location is the cytoplasm. The catalysed reaction is (6R)-5,10-methylene-5,6,7,8-tetrahydrofolate + glycine + H2O = (6S)-5,6,7,8-tetrahydrofolate + L-serine. It participates in one-carbon metabolism; tetrahydrofolate interconversion. The protein operates within amino-acid biosynthesis; glycine biosynthesis; glycine from L-serine: step 1/1. Its function is as follows. Catalyzes the reversible interconversion of serine and glycine with tetrahydrofolate (THF) serving as the one-carbon carrier. This reaction serves as the major source of one-carbon groups required for the biosynthesis of purines, thymidylate, methionine, and other important biomolecules. Also exhibits THF-independent aldolase activity toward beta-hydroxyamino acids, producing glycine and aldehydes, via a retro-aldol mechanism. The chain is Serine hydroxymethyltransferase 1 from Burkholderia mallei (strain ATCC 23344).